The following is a 243-amino-acid chain: uncharacterized protein (243 aa).

The N-terminal stretch at 1–19 (MDELALSFSLTCLLPENRA) is a signal peptide. Asn136 is a glycosylation site (N-linked (GlcNAc...) asparagine).

The protein resides in the secreted. This is an uncharacterized protein from Homo sapiens (Human).